The chain runs to 363 residues: Tetraacyldisaccharide 4'-kinase (363 aa).

62–69 (RVGGTGKT) lines the ATP pocket.

It belongs to the LpxK family.

It carries out the reaction a lipid A disaccharide + ATP = a lipid IVA + ADP + H(+). The protein operates within glycolipid biosynthesis; lipid IV(A) biosynthesis; lipid IV(A) from (3R)-3-hydroxytetradecanoyl-[acyl-carrier-protein] and UDP-N-acetyl-alpha-D-glucosamine: step 6/6. Transfers the gamma-phosphate of ATP to the 4'-position of a tetraacyldisaccharide 1-phosphate intermediate (termed DS-1-P) to form tetraacyldisaccharide 1,4'-bis-phosphate (lipid IVA). The protein is Tetraacyldisaccharide 4'-kinase of Polynucleobacter asymbioticus (strain DSM 18221 / CIP 109841 / QLW-P1DMWA-1) (Polynucleobacter necessarius subsp. asymbioticus).